The sequence spans 306 residues: Homoserine kinase (306 aa).

95–105 lines the ATP pocket; that stretch reads PHSRGLGSSAA.

It belongs to the GHMP kinase family. Homoserine kinase subfamily.

It localises to the cytoplasm. It catalyses the reaction L-homoserine + ATP = O-phospho-L-homoserine + ADP + H(+). It functions in the pathway amino-acid biosynthesis; L-threonine biosynthesis; L-threonine from L-aspartate: step 4/5. Catalyzes the ATP-dependent phosphorylation of L-homoserine to L-homoserine phosphate. The polypeptide is Homoserine kinase (Mycobacteroides abscessus (strain ATCC 19977 / DSM 44196 / CCUG 20993 / CIP 104536 / JCM 13569 / NCTC 13031 / TMC 1543 / L948) (Mycobacterium abscessus)).